The following is a 288-amino-acid chain: MKFLLAFSLLIPSVVFASSSKFQQVEQDVKAIEVSLSARIGVSVLDTQNGEYWDYNGNQRFPLTSTFKTIACAKLLYDAEQGKVNPNSTVEIKKADLVTYSPVIEKQVGQAITLDDACFATMTTSDNTAANIILSAVGGPKGVTDFLRQIGDKETRLDRIEPDLNEGKLGDLRDTTTPKAIASTLNKFLFGSALSEMNQKKLESWMVNNQVTGNLLRSVLPAGWNIADRSGAGGFGARSITAVVWSEHQAPIIVSIYLAQTQASMEERNDAIVKIGHSIFDVYTSQSR.

An N-terminal signal peptide occupies residues Met-1–Ala-17. Ser-65 acts as the Acyl-ester intermediate in catalysis. Cys-72 and Cys-118 are disulfide-bonded. Arg-229–Gly-231 contributes to the substrate binding site.

It belongs to the class-A beta-lactamase family.

The enzyme catalyses a beta-lactam + H2O = a substituted beta-amino acid. In terms of biological role, hydrolyzes both carbenicillin and oxacillin. The protein is Beta-lactamase PSE-4 (pse4) of Pseudomonas aeruginosa.